The chain runs to 1017 residues: Probable beta-galactosidase B (1017 aa).

The N-terminal stretch at 1-20 (MTRITKLCVLLLSSIGLLAA) is a signal peptide. The N-linked (GlcNAc...) asparagine glycan is linked to N23. A substrate-binding site is contributed by Y90. N100 is a glycosylation site (N-linked (GlcNAc...) asparagine). 3 residues coordinate substrate: N135, A136, and E137. A glycan (N-linked (GlcNAc...) asparagine) is linked at N158. N195 provides a ligand contact to substrate. E196 functions as the Proton donor in the catalytic mechanism. N211 carries N-linked (GlcNAc...) asparagine glycosylation. Y265 is a binding site for substrate. C271 and C324 are disulfide-bonded. The active-site Nucleophile is E308. Substrate is bound at residue Y373. 11 N-linked (GlcNAc...) asparagine glycosylation sites follow: N411, N417, N456, N628, N681, N737, N770, N777, N785, N828, and N829.

Belongs to the glycosyl hydrolase 35 family.

Its subcellular location is the secreted. It catalyses the reaction Hydrolysis of terminal non-reducing beta-D-galactose residues in beta-D-galactosides.. In terms of biological role, cleaves beta-linked terminal galactosyl residues from gangliosides, glycoproteins, and glycosaminoglycans. The protein is Probable beta-galactosidase B (lacB) of Aspergillus niger (strain ATCC MYA-4892 / CBS 513.88 / FGSC A1513).